The primary structure comprises 92 residues: Transcription factor PRE4 (92 aa).

Positions 5 to 60 constitute a bHLH domain; it reads KSRSRQTGASMITDEQINDLVLQLHRLLPELANNRRSGKVSASRVLQETCSYIRNL.

This sequence belongs to the bHLH protein family. In terms of assembly, interacts with HFR1 and IBH1. Expressed in roots, leaves, stems and flowers.

The protein resides in the nucleus. Functionally, atypical and probable non DNA-binding bHLH transcription factor that integrates multiple signaling pathways to regulate cell elongation and plant development. Regulates light responses by binding and inhibiting the activity of the bHLH transcription factor HFR1, a critical regulator of light signaling and shade avoidance. May have a regulatory role in various aspects of gibberellin-dependent growth and development. This Arabidopsis thaliana (Mouse-ear cress) protein is Transcription factor PRE4 (PRE4).